The primary structure comprises 211 residues: Ribosomal RNA small subunit methyltransferase G (211 aa).

Residues Gly-76, Leu-81, Val-127–Glu-128, and Arg-142 each bind S-adenosyl-L-methionine.

The protein belongs to the methyltransferase superfamily. RNA methyltransferase RsmG family.

It is found in the cytoplasm. It catalyses the reaction guanosine(527) in 16S rRNA + S-adenosyl-L-methionine = N(7)-methylguanosine(527) in 16S rRNA + S-adenosyl-L-homocysteine. Its function is as follows. Specifically methylates the N7 position of guanine in position 527 of 16S rRNA. The polypeptide is Ribosomal RNA small subunit methyltransferase G (Vibrio vulnificus (strain CMCP6)).